Consider the following 227-residue polypeptide: Cytochrome c oxidase subunit 2 (227 aa).

Topologically, residues 1 to 14 (MAYPFQLGFQDASS) are mitochondrial intermembrane. Residues 15–45 (PIMEELLHFHDHTLMIVFLISSLVLYIISLM) form a helical membrane-spanning segment. Residues 46–59 (LTTKLTHTSTMDAQ) lie on the Mitochondrial matrix side of the membrane. A helical transmembrane segment spans residues 60–87 (EVETIWTILPAIILILIALPSLRILYMM). At 88 to 227 (DEINNPSLTV…HFENWSLSMI (140 aa)) the chain is on the mitochondrial intermembrane side. Residues His-161, Cys-196, Glu-198, Cys-200, His-204, and Met-207 each coordinate Cu cation. Glu-198 lines the Mg(2+) pocket.

Belongs to the cytochrome c oxidase subunit 2 family. Component of the cytochrome c oxidase (complex IV, CIV), a multisubunit enzyme composed of 14 subunits. The complex is composed of a catalytic core of 3 subunits MT-CO1, MT-CO2 and MT-CO3, encoded in the mitochondrial DNA, and 11 supernumerary subunits COX4I, COX5A, COX5B, COX6A, COX6B, COX6C, COX7A, COX7B, COX7C, COX8 and NDUFA4, which are encoded in the nuclear genome. The complex exists as a monomer or a dimer and forms supercomplexes (SCs) in the inner mitochondrial membrane with NADH-ubiquinone oxidoreductase (complex I, CI) and ubiquinol-cytochrome c oxidoreductase (cytochrome b-c1 complex, complex III, CIII), resulting in different assemblies (supercomplex SCI(1)III(2)IV(1) and megacomplex MCI(2)III(2)IV(2)). Found in a complex with TMEM177, COA6, COX18, COX20, SCO1 and SCO2. Interacts with TMEM177 in a COX20-dependent manner. Interacts with COX20. Interacts with COX16. Cu cation is required as a cofactor.

It localises to the mitochondrion inner membrane. The catalysed reaction is 4 Fe(II)-[cytochrome c] + O2 + 8 H(+)(in) = 4 Fe(III)-[cytochrome c] + 2 H2O + 4 H(+)(out). In terms of biological role, component of the cytochrome c oxidase, the last enzyme in the mitochondrial electron transport chain which drives oxidative phosphorylation. The respiratory chain contains 3 multisubunit complexes succinate dehydrogenase (complex II, CII), ubiquinol-cytochrome c oxidoreductase (cytochrome b-c1 complex, complex III, CIII) and cytochrome c oxidase (complex IV, CIV), that cooperate to transfer electrons derived from NADH and succinate to molecular oxygen, creating an electrochemical gradient over the inner membrane that drives transmembrane transport and the ATP synthase. Cytochrome c oxidase is the component of the respiratory chain that catalyzes the reduction of oxygen to water. Electrons originating from reduced cytochrome c in the intermembrane space (IMS) are transferred via the dinuclear copper A center (CU(A)) of subunit 2 and heme A of subunit 1 to the active site in subunit 1, a binuclear center (BNC) formed by heme A3 and copper B (CU(B)). The BNC reduces molecular oxygen to 2 water molecules using 4 electrons from cytochrome c in the IMS and 4 protons from the mitochondrial matrix. This is Cytochrome c oxidase subunit 2 (MT-CO2) from Oryctolagus cuniculus (Rabbit).